The primary structure comprises 735 residues: DNA replication licensing factor mcm5-A (735 aa).

The MCM domain maps to 332–538; it reads IYETVAKSIA…RDMTLAKHVM (207 aa). R372 contributes to the ADP binding site. The short motif at 513–516 is the Arginine finger element; sequence SRFD.

Belongs to the MCM family. In terms of assembly, component of the mcm2-7 complex (RLF-M). The complex forms a toroidal hexameric ring with the proposed subunit order mcm2-mcm6-mcm4-mcm7-mcm3-mcm5. The heterodimer of mmcm3/mcm5 interacts with mcm4, mmcm6, mcm7 and weakly with mcm2. Component of the CMG helicase complex, composed of the mcm2-7 complex, the GINS complex and cdc45.

It localises to the nucleus. Its subcellular location is the chromosome. It carries out the reaction ATP + H2O = ADP + phosphate + H(+). Acts as a component of the MCM2-7 complex (MCM complex) which is the replicative helicase essential for 'once per cell cycle' DNA replication initiation and elongation in eukaryotic cells. Core component of CDC45-MCM-GINS (CMG) helicase, the molecular machine that unwinds template DNA during replication, and around which the replisome is built. The active ATPase sites in the MCM2-7 ring are formed through the interaction surfaces of two neighboring subunits such that a critical structure of a conserved arginine finger motif is provided in trans relative to the ATP-binding site of the Walker A box of the adjacent subunit. The six ATPase active sites, however, are likely to contribute differentially to the complex helicase activity. This Xenopus laevis (African clawed frog) protein is DNA replication licensing factor mcm5-A (mcm5-a).